The sequence spans 236 residues: Apoptosis regulator Bcl-2 (236 aa).

The short motif at 10–30 is the BH4 element; that stretch reads DNREIVMKYIHYKLSQRGYEW. Thr-69 carries the post-translational modification Phosphothreonine; by MAPK8. At Ser-70 the chain carries Phosphoserine; by MAPK8 and PKC. Position 84 is a phosphoserine; by MAPK8 (Ser-84). Positions 90–104 match the BH3 motif; the sequence is VHLTLRRAGDDFSRR. Residues 133 to 152 carry the BH1 motif; it reads ELFRDGVNWGRIVAFFEFGG. The BH2 signature appears at 184–199; it reads TWIQDNGGWDAFVELY. Residues 209 to 230 form a helical membrane-spanning segment; sequence FSWLSLKTLLSLALVGACITLG.

It belongs to the Bcl-2 family. Forms homodimers, and heterodimers with BAX, BAD, BAK and Bcl-X(L). Heterodimerization with BAX requires intact BH1 and BH2 motifs, and is necessary for anti-apoptotic activity. Component of the complex, at least composed of LRPPRC, BECN1 and BCL2; the interactions prevent BECN1 from forming an autophagy-inducing complex with PIK3C3. Interacts with EI24. Also interacts with APAF1, BBC3, BCL2L1, BNIPL, MRPL41 and TP53BP2. Binding to FKBP8 seems to target BCL2 to the mitochondria and probably interferes with the binding of BCL2 to its targets. Interacts with BAG1 in an ATP-dependent manner. Interacts with RAF1 (the 'Ser-338' and 'Ser-339' phosphorylated form). Interacts (via the BH4 domain) with EGLN3; the interaction prevents the formation of the BAX-BCL2 complex and inhibits the anti-apoptotic activity of BCL2. Interacts with G0S2; this interaction also prevents the formation of the anti-apoptotic BAX-BCL2 complex. Interacts with RTL10/BOP. Interacts with the SCF(FBXO10) complex. Interacts (via the loop between motifs BH4 and BH3) with NLRP1 (via LRR repeats), but not with NLRP2, NLRP3, NLRP4, PYCARD, nor MEFV. Interacts with GIMAP3/IAN4, GIMAP4/IAN1 and GIMAP5/IAN5. Interacts with BCAP31. Interacts with IRF3; the interaction is inhibited by Sendai virus infection. Interacts with BECN1; thereby inhibiting autophagy in non-starvation conditions. Interacts with AMBRA1; thereby inhibiting autophagy. Post-translationally, phosphorylation/dephosphorylation on Ser-70 regulates anti-apoptotic activity. Growth factor-stimulated phosphorylation on Ser-70 by PKC is required for the anti-apoptosis activity and occurs during the G2/M phase of the cell cycle. In the absence of growth factors, BCL2 appears to be phosphorylated by other protein kinases such as ERKs and stress-activated kinases. Phosphorylated by MAPK8/JNK1 at Thr-69, Ser-70 and Ser-84, which stimulates starvation-induced autophagy. Dephosphorylated by protein phosphatase 2A (PP2A). In terms of processing, proteolytically cleaved by caspases during apoptosis. The cleaved protein, lacking the BH4 motif, has pro-apoptotic activity, causes the release of cytochrome c into the cytosol promoting further caspase activity. Monoubiquitinated by PRKN, leading to an increase in its stability. Ubiquitinated by SCF(FBXO10), leading to its degradation by the proteasome.

It localises to the mitochondrion outer membrane. The protein resides in the nucleus membrane. It is found in the endoplasmic reticulum membrane. Its subcellular location is the cytoplasm. In terms of biological role, suppresses apoptosis in a variety of cell systems including factor-dependent lymphohematopoietic and neural cells. Regulates cell death by controlling the mitochondrial membrane permeability. Appears to function in a feedback loop system with caspases. Inhibits caspase activity either by preventing the release of cytochrome c from the mitochondria and/or by binding to the apoptosis-activating factor (APAF-1). Also acts as an inhibitor of autophagy: interacts with BECN1 and AMBRA1 during non-starvation conditions and inhibits their autophagy function. May attenuate inflammation by impairing NLRP1-inflammasome activation, hence CASP1 activation and IL1B release. The protein is Apoptosis regulator Bcl-2 (BCL2) of Cricetulus griseus (Chinese hamster).